The following is a 440-amino-acid chain: Phosphoglucosamine mutase (440 aa).

The Phosphoserine intermediate role is filled by Ser97. 4 residues coordinate Mg(2+): Ser97, Asp237, Asp239, and Asp241. Ser97 carries the phosphoserine modification.

The protein belongs to the phosphohexose mutase family. Mg(2+) serves as cofactor. In terms of processing, activated by phosphorylation.

It catalyses the reaction alpha-D-glucosamine 1-phosphate = D-glucosamine 6-phosphate. Its function is as follows. Catalyzes the conversion of glucosamine-6-phosphate to glucosamine-1-phosphate. The protein is Phosphoglucosamine mutase of Nautilia profundicola (strain ATCC BAA-1463 / DSM 18972 / AmH).